We begin with the raw amino-acid sequence, 498 residues long: ATP synthase subunit beta, chloroplastic (498 aa).

172–179 serves as a coordination point for ATP; that stretch reads GGAGVGKT.

This sequence belongs to the ATPase alpha/beta chains family. F-type ATPases have 2 components, CF(1) - the catalytic core - and CF(0) - the membrane proton channel. CF(1) has five subunits: alpha(3), beta(3), gamma(1), delta(1), epsilon(1). CF(0) has four main subunits: a(1), b(1), b'(1) and c(9-12).

The protein localises to the plastid. The protein resides in the chloroplast thylakoid membrane. It carries out the reaction ATP + H2O + 4 H(+)(in) = ADP + phosphate + 5 H(+)(out). Its function is as follows. Produces ATP from ADP in the presence of a proton gradient across the membrane. The catalytic sites are hosted primarily by the beta subunits. This chain is ATP synthase subunit beta, chloroplastic, found in Castanea sativa (Sweet chestnut).